Reading from the N-terminus, the 204-residue chain is Ribosomal RNA small subunit methyltransferase G (204 aa).

S-adenosyl-L-methionine contacts are provided by residues Gly-76, Leu-81, Ile-127–Glu-128, and Arg-140.

It belongs to the methyltransferase superfamily. RNA methyltransferase RsmG family.

The protein resides in the cytoplasm. The enzyme catalyses guanosine(527) in 16S rRNA + S-adenosyl-L-methionine = N(7)-methylguanosine(527) in 16S rRNA + S-adenosyl-L-homocysteine. Specifically methylates the N7 position of guanine in position 527 of 16S rRNA. This chain is Ribosomal RNA small subunit methyltransferase G, found in Francisella philomiragia subsp. philomiragia (strain ATCC 25017 / CCUG 19701 / FSC 153 / O#319-036).